The primary structure comprises 502 residues: UDP-N-acetylmuramoylalanine--D-glutamate ligase (502 aa).

An ATP-binding site is contributed by 129–135 (GTNGKTT).

It belongs to the MurCDEF family.

The protein localises to the cytoplasm. It catalyses the reaction UDP-N-acetyl-alpha-D-muramoyl-L-alanine + D-glutamate + ATP = UDP-N-acetyl-alpha-D-muramoyl-L-alanyl-D-glutamate + ADP + phosphate + H(+). It functions in the pathway cell wall biogenesis; peptidoglycan biosynthesis. Its function is as follows. Cell wall formation. Catalyzes the addition of glutamate to the nucleotide precursor UDP-N-acetylmuramoyl-L-alanine (UMA). In Burkholderia ambifaria (strain MC40-6), this protein is UDP-N-acetylmuramoylalanine--D-glutamate ligase.